Consider the following 399-residue polypeptide: Serine/threonine-protein kinase PKZ1 (399 aa).

The interval 30–50 is disordered; the sequence is PMQCAYQTQSHSNPEGAKRGR. The Protein kinase domain occupies 92-371; it reads WQLFDQIGAG…ADQMLQHPWM (280 aa). Residues 98–106 and K121 each bind ATP; that span reads IGAGAFGVV. The Proton acceptor role is filled by D219.

Belongs to the protein kinase superfamily. CAMK Ser/Thr protein kinase family. As to quaternary structure, interacts with BZP1.

The enzyme catalyses L-seryl-[protein] + ATP = O-phospho-L-seryl-[protein] + ADP + H(+). It catalyses the reaction L-threonyl-[protein] + ATP = O-phospho-L-threonyl-[protein] + ADP + H(+). May regulate an early stage of the zoospore pathway. The sequence is that of Serine/threonine-protein kinase PKZ1 from Phytophthora infestans (Potato late blight agent).